A 504-amino-acid chain; its full sequence is ATP synthase subunit alpha (504 aa).

Residue 170–177 participates in ATP binding; that stretch reads GDRQTGKT.

It belongs to the ATPase alpha/beta chains family. In terms of assembly, F-type ATPases have 2 components, CF(1) - the catalytic core - and CF(0) - the membrane proton channel. CF(1) has five subunits: alpha(3), beta(3), gamma(1), delta(1), epsilon(1). CF(0) has four main subunits: a(1), b(1), b'(1) and c(9-12).

It is found in the cellular thylakoid membrane. It carries out the reaction ATP + H2O + 4 H(+)(in) = ADP + phosphate + 5 H(+)(out). Its function is as follows. Produces ATP from ADP in the presence of a proton gradient across the membrane. The alpha chain is a regulatory subunit. This chain is ATP synthase subunit alpha, found in Prochlorococcus marinus (strain NATL2A).